Here is a 216-residue protein sequence, read N- to C-terminus: MNGEEVKTSQPQKKLQNPTPRLNERILSSLSKRSVAAHPWHDLEIGPGAPVIFNVVIEISKGSKVKYELDKKTGLIKVDRILYSSVVYPHNYGFVPRTLCEDNDPIDVLVIMQEPVLPGCFLRARAIGLMPMIDQGEKDDKIIAVCVDDPEYKHITNINELPPHRLSEIRRFFEDYKKNENKEVAVNDFLQPGPAIEAIQYSMDLYAEYILHTLRR.

Residues 1–20 form a disordered region; sequence MNGEEVKTSQPQKKLQNPTP. The segment covering 8–20 has biased composition (polar residues); it reads TSQPQKKLQNPTP. Residues Lys-66 and Arg-80 each coordinate substrate. Catalysis depends on Tyr-88, which acts as the Proton donor. Tyr-92 provides a ligand contact to substrate. Mg(2+) contacts are provided by Asp-102, Asp-107, and Asp-139. Tyr-176 contacts substrate.

This sequence belongs to the PPase family. Mg(2+) serves as cofactor.

Its subcellular location is the cytoplasm. The enzyme catalyses diphosphate + H2O = 2 phosphate + H(+). This is Soluble inorganic pyrophosphatase 5 from Arabidopsis thaliana (Mouse-ear cress).